We begin with the raw amino-acid sequence, 175 residues long: RNA pyrophosphohydrolase (175 aa).

The 144-residue stretch at Gly6–Thr149 folds into the Nudix hydrolase domain. The Nudix box motif lies at Gly38–Gly59.

Belongs to the Nudix hydrolase family. RppH subfamily. The cofactor is a divalent metal cation.

Accelerates the degradation of transcripts by removing pyrophosphate from the 5'-end of triphosphorylated RNA, leading to a more labile monophosphorylated state that can stimulate subsequent ribonuclease cleavage. The protein is RNA pyrophosphohydrolase of Azoarcus sp. (strain BH72).